Here is a 691-residue protein sequence, read N- to C-terminus: Protein vreteno (691 aa).

The segment at 128-155 (QKEREITSDPVTSTEPMPTPGPAISATE) is disordered. 2 Tudor domains span residues 366–427 (KLQS…LAGL) and 573–630 (APPI…FIFP).

Interacts with aub and piwi. Gonad-specific.

The protein localises to the cytoplasm. It is found in the cytoplasmic ribonucleoprotein granule. Functionally, gonad-specific protein essential for germline development to repress transposable elements and preventing their mobilization, which is essential for the germline integrity. Acts via the piRNA metabolic process in both germline and somatic gonadal tissues by mediating the repression of transposable elements during meiosis. Required for primary piRNA biogenesis in both germline and somatic gonadal tissues. In Drosophila melanogaster (Fruit fly), this protein is Protein vreteno (vret).